The following is a 362-amino-acid chain: Phosphate acyltransferase (362 aa).

A disordered region spans residues 343-362; the sequence is TKKISTSTINPKTSETTKES. The span at 344 to 356 shows a compositional bias: polar residues; that stretch reads KKISTSTINPKTS.

Belongs to the PlsX family. In terms of assembly, homodimer. Probably interacts with PlsY.

It is found in the cytoplasm. It carries out the reaction a fatty acyl-[ACP] + phosphate = an acyl phosphate + holo-[ACP]. The protein operates within lipid metabolism; phospholipid metabolism. In terms of biological role, catalyzes the reversible formation of acyl-phosphate (acyl-PO(4)) from acyl-[acyl-carrier-protein] (acyl-ACP). This enzyme utilizes acyl-ACP as fatty acyl donor, but not acyl-CoA. The polypeptide is Phosphate acyltransferase (Aster yellows witches'-broom phytoplasma (strain AYWB)).